Consider the following 476-residue polypeptide: Glutamate--tRNA ligase (476 aa).

The 'HIGH' region motif lies at 9 to 19 (PSPTGTLHIGT). The 'KMSKS' region signature appears at 248-252 (KLSKR). Lys251 provides a ligand contact to ATP.

It belongs to the class-I aminoacyl-tRNA synthetase family. Glutamate--tRNA ligase type 1 subfamily. In terms of assembly, monomer.

It localises to the cytoplasm. The catalysed reaction is tRNA(Glu) + L-glutamate + ATP = L-glutamyl-tRNA(Glu) + AMP + diphosphate. Functionally, catalyzes the attachment of glutamate to tRNA(Glu) in a two-step reaction: glutamate is first activated by ATP to form Glu-AMP and then transferred to the acceptor end of tRNA(Glu). The sequence is that of Glutamate--tRNA ligase from Prochlorococcus marinus (strain MIT 9303).